Consider the following 438-residue polypeptide: Xylose isomerase (438 aa).

Residues histidine 103 and aspartate 106 contribute to the active site. Residues glutamate 234, glutamate 270, histidine 273, aspartate 298, aspartate 309, aspartate 311, and aspartate 341 each contribute to the Mg(2+) site.

The protein belongs to the xylose isomerase family. As to quaternary structure, homotetramer. The cofactor is Mg(2+).

It localises to the cytoplasm. The catalysed reaction is alpha-D-xylose = alpha-D-xylulofuranose. This Bacteroides thetaiotaomicron (strain ATCC 29148 / DSM 2079 / JCM 5827 / CCUG 10774 / NCTC 10582 / VPI-5482 / E50) protein is Xylose isomerase.